The primary structure comprises 546 residues: Chaperonin GroEL (546 aa).

ATP is bound by residues 29 to 32 (TMGP), Lys50, 86 to 90 (DGTTT), Gly414, and Asp492.

The protein belongs to the chaperonin (HSP60) family. As to quaternary structure, forms a cylinder of 14 subunits composed of two heptameric rings stacked back-to-back. Interacts with the co-chaperonin GroES.

It is found in the cytoplasm. It carries out the reaction ATP + H2O + a folded polypeptide = ADP + phosphate + an unfolded polypeptide.. Functionally, together with its co-chaperonin GroES, plays an essential role in assisting protein folding. The GroEL-GroES system forms a nano-cage that allows encapsulation of the non-native substrate proteins and provides a physical environment optimized to promote and accelerate protein folding. The sequence is that of Chaperonin GroEL from Helicobacter pylori (strain P12).